Reading from the N-terminus, the 250-residue chain is rRNA methyltransferase 2, mitochondrial (250 aa).

A mitochondrion-targeting transit peptide spans 1–35; that stretch reads MRLVFTGNCVFKRLLHTEIGGKYAKQQPRNLKGRS. S-adenosyl-L-methionine is bound by residues 90 to 93, D119, 136 to 137, and D161; these read PGSW and DF. The active-site Proton acceptor is the K201.

Belongs to the class I-like SAM-binding methyltransferase superfamily. RNA methyltransferase RlmE family.

The protein resides in the mitochondrion. The catalysed reaction is a uridine in rRNA + S-adenosyl-L-methionine = a 2'-O-methyluridine in rRNA + S-adenosyl-L-homocysteine + H(+). S-adenosyl-L-methionine-dependent 2'-O-ribose methyltransferase that catalyzes the formation of 2'-O-methyluridine at position 1579 (Um1579) in the mitochondrial large subunit ribosomal RNA (mtLSU rRNA), a universally conserved modification in the peptidyl transferase domain of the mtLSU rRNA. This activity may require prior 2'-O-methylguanosine modification at position 1580 (Gm1580) by MRM3. Essential for late-stage assembly of mtLSU required for efficient translation of mitochondrial DNA encoded proteins; methyltransferase activity is not required for this function. Essential for mitochondrial respiratory function. The sequence is that of rRNA methyltransferase 2, mitochondrial from Drosophila melanogaster (Fruit fly).